We begin with the raw amino-acid sequence, 261 residues long: MAVQGIWSGTISFSLVAIPVQLVKAVAIGRVSFRLLHDKDYSPLARRMFCPEQEKMVPPDEIIRGYEIGPDRYLPITDEELESVSPERSRTIEIVEFIDMNEVDPIYYDHPYYLVPLKGGEKAYRLLVEVMRRTNKAGLAKFVLAEREYLVAVKSTEGALTLITLHYSDEVLSDEDIAPKEGKIAAEVKSGIKKSIKNMMADFNPGKYADERRDKVMDLLKKKVKEKAPVAAPEVEKAEGEGPADLIAALEEIMREVKKNR.

The Ku domain maps to 12–171 (SFSLVAIPVQ…LITLHYSDEV (160 aa)).

It belongs to the prokaryotic Ku family. Homodimer. Interacts with LigD.

Functionally, with LigD forms a non-homologous end joining (NHEJ) DNA repair enzyme, which repairs dsDNA breaks with reduced fidelity. Binds linear dsDNA with 5'- and 3'- overhangs but not closed circular dsDNA nor ssDNA. Recruits and stimulates the ligase activity of LigD. The sequence is that of Non-homologous end joining protein Ku 1 from Geotalea uraniireducens (strain Rf4) (Geobacter uraniireducens).